A 170-amino-acid polypeptide reads, in one-letter code: Cathelicidin antimicrobial peptide (170 aa).

The first 30 residues, 1 to 30 (MKTQRDSPSLGRWSLVLLLLGLVMPLAIVA), serve as a signal peptide directing secretion. A propeptide spans 31 to 131 (QVLSYQEAVL…DISCDKDNRR (101 aa)) (cathelin-like domain (CLD)). Disulfide bonds link Cys-86/Cys-97 and Cys-108/Cys-125. The segment at 150-162 (FKRIVQRIKDFLQ) is active core.

It belongs to the cathelicidin family. As to quaternary structure, monomer, homodimer or homotrimer (in vitro). Oligomerizes as tetra- or hexamer in solution (in vitro). In terms of processing, proteolytically cleaved by proteinase PRTN3 into antibacterial peptide LL-37. Proteolytically cleaved by cathepsin CTSG and neutrophil elastase ELANE. Resistant to proteolytic degradation in solution, and when bound to both zwitterionic (mimicking mammalian membranes) and negatively charged membranes (mimicking bacterial membranes). Post-translationally, after secretion onto the skin surface, the CAMP gene product is processed by a serine protease-dependent mechanism into multiple novel antimicrobial peptides distinct from and shorter than cathelicidin LL-37. These peptides show enhanced antimicrobial action, acquiring the ability to kill skin pathogens such as S.aureus, E.coli and C.albicans. These peptides have lost the ability to stimulate CXCL8/IL8 release from keratinocytes. The peptides act synergistically, killing bacteria at lower concentrations when present together, and maintain activity at increased salt condition.

It is found in the secreted. It localises to the vesicle. In terms of biological role, antimicrobial protein that is an integral component of the innate immune system. Binds to bacterial lipopolysaccharides (LPS). Acts via neutrophil N-formyl peptide receptors to enhance the release of CXCL2. Postsecretory processing generates multiple cathelicidin antimicrobial peptides with various lengths which act as a topical antimicrobial defense in sweat on skin. The unprocessed precursor form, cathelicidin antimicrobial peptide, inhibits the growth of Gram-negative E.coli and E.aerogenes with efficiencies comparable to that of the mature peptide LL-37 (in vitro). Functionally, antimicrobial peptide that is an integral component of the innate immune system. Binds to bacterial lipopolysaccharides (LPS). Causes membrane permeabilization by forming transmembrane pores (in vitro). Causes lysis of E.coli. Exhibits antimicrobial activity against Gram-negative bacteria such as P.aeruginosa, S.typhimurium, E.aerogenes, E.coli and P.syringae, Gram-positive bacteria such as L.monocytogenes, S.epidermidis, S.pyogenes and S.aureus, as well as vancomycin-resistant enterococci (in vitro). Exhibits antimicrobial activity against methicillin-resistant S.aureus, P.mirabilis, and C.albicans in low-salt media, but not in media containing 100 mM NaCl (in vitro). Forms chiral supramolecular assemblies with quinolone signal (PQS) molecules of P.aeruginosa, which may lead to interference of bacterial quorum signaling and perturbance of bacterial biofilm formation. May form supramolecular fiber-like assemblies on bacterial membranes. Induces cytokine and chemokine producation as well as TNF/TNFA and CSF2/GMCSF production in normal human keratinocytes. Exhibits hemolytic activity against red blood cells. Exhibits antimicrobial activity against E.coli and B.megaterium (in vitro). The chain is Cathelicidin antimicrobial peptide from Nomascus concolor (Black crested gibbon).